The primary structure comprises 180 residues: MKTVKKAPVANRPNRINDEIRVKEVRLIDQDGEQAGIVSIQQALEMAEQAELDLVEISPNAEPPVCRIMNYGKFLYEKGKAAKEQKKKQKVVQVKEIKFRPGTDEGDYQVKLRSLIRFLEEGDKAKITVRFRGREMAHQDIGLEVLERVKNDLAEISVVESAPGRLEGRQAVMVLAPKKK.

The protein belongs to the IF-3 family. As to quaternary structure, monomer.

The protein resides in the cytoplasm. Its function is as follows. IF-3 binds to the 30S ribosomal subunit and shifts the equilibrium between 70S ribosomes and their 50S and 30S subunits in favor of the free subunits, thus enhancing the availability of 30S subunits on which protein synthesis initiation begins. The protein is Translation initiation factor IF-3 of Pasteurella multocida (strain Pm70).